Consider the following 278-residue polypeptide: Large ribosomal subunit protein uL2 (278 aa).

Disordered regions lie at residues Met-1–Asp-20 and Val-225–Arg-278. Residues Arg-258–Arg-278 show a composition bias toward basic residues.

It belongs to the universal ribosomal protein uL2 family. As to quaternary structure, part of the 50S ribosomal subunit. Forms a bridge to the 30S subunit in the 70S ribosome.

Its function is as follows. One of the primary rRNA binding proteins. Required for association of the 30S and 50S subunits to form the 70S ribosome, for tRNA binding and peptide bond formation. It has been suggested to have peptidyltransferase activity; this is somewhat controversial. Makes several contacts with the 16S rRNA in the 70S ribosome. In Cutibacterium acnes (strain DSM 16379 / KPA171202) (Propionibacterium acnes), this protein is Large ribosomal subunit protein uL2.